The following is a 140-amino-acid chain: Small ribosomal subunit protein eS17x (140 aa).

It belongs to the eukaryotic ribosomal protein eS17 family.

The chain is Small ribosomal subunit protein eS17x (RPS17C) from Arabidopsis thaliana (Mouse-ear cress).